Here is a 239-residue protein sequence, read N- to C-terminus: Carboxy-S-adenosyl-L-methionine synthase (239 aa).

S-adenosyl-L-methionine contacts are provided by residues Tyr-35, 64 to 66 (GCS), 88 to 89 (DN), and Arg-195.

This sequence belongs to the class I-like SAM-binding methyltransferase superfamily. Cx-SAM synthase family. Homodimer.

It carries out the reaction prephenate + S-adenosyl-L-methionine = carboxy-S-adenosyl-L-methionine + 3-phenylpyruvate + H2O. Its function is as follows. Catalyzes the conversion of S-adenosyl-L-methionine (SAM) to carboxy-S-adenosyl-L-methionine (Cx-SAM). This Helicobacter pylori (strain G27) protein is Carboxy-S-adenosyl-L-methionine synthase.